Consider the following 44-residue polypeptide: Metallothionein-4 (44 aa).

Belongs to the metallothionein superfamily. Type 5 family.

Its function is as follows. This protein binds cations of several transition elements. Thought to be involved in metal ion homeostasis. The chain is Metallothionein-4 (MtnD) from Drosophila melanogaster (Fruit fly).